The sequence spans 443 residues: ATP-dependent protease ATPase subunit HslU (443 aa).

ATP-binding positions include Ile-18, 60–65, Asp-256, Glu-321, and Arg-393; that span reads GVGKTE.

It belongs to the ClpX chaperone family. HslU subfamily. A double ring-shaped homohexamer of HslV is capped on each side by a ring-shaped HslU homohexamer. The assembly of the HslU/HslV complex is dependent on binding of ATP.

The protein resides in the cytoplasm. Functionally, ATPase subunit of a proteasome-like degradation complex; this subunit has chaperone activity. The binding of ATP and its subsequent hydrolysis by HslU are essential for unfolding of protein substrates subsequently hydrolyzed by HslV. HslU recognizes the N-terminal part of its protein substrates and unfolds these before they are guided to HslV for hydrolysis. This chain is ATP-dependent protease ATPase subunit HslU, found in Histophilus somni (strain 2336) (Haemophilus somnus).